A 367-amino-acid polypeptide reads, in one-letter code: Alpha-2-HS-glycoprotein (367 aa).

The first 18 residues, 1 to 18 (MKSLVLLLCLAQLWGCHS), serve as a signal peptide directing secretion. One can recognise a Cystatin fetuin-A-type 1 domain in the interval 27-133 (YRQPNCDDPE…KFSVVYAKCD (107 aa)). 6 disulfide bridges follow: C32–C358, C89–C100, C114–C132, C146–C149, C208–C219, and C230–C247. S134 is modified (phosphoserine). 2 positions are modified to phosphoserine; by FAM20C: S135 and S138. Residues 144–255 (KVCQDCPLLA…TCMVFQTQPV (112 aa)) form the Cystatin fetuin-A-type 2 domain. N-linked (GlcNAc...) (complex) asparagine glycosylation is found at N156 and N176. Residues 255 to 298 (VSSQPQPEGANEAVPTPVVDPDAPPSPPLGAPGLPPAGSPPDSH) are disordered. T270 carries an O-linked (GalNAc...) threonine glycan. Pro residues predominate over residues 276-293 (DAPPSPPLGAPGLPPAGS). S280 and S293 each carry an O-linked (GalNAc...) serine glycan. Positions 301–340 (LAAPPGHQLHRAHYDLRHTFMGVVSLGSPSGEVSHPRKTR) are cleaved as a propeptide — connecting peptide. A Phosphothreonine; by FAM20C modification is found at T319. Phosphoserine; by FAM20C occurs at positions 325, 328, and 330. Residues T339 and T341 are each glycosylated (O-linked (GalNAc...) threonine). S346 carries an O-linked (GalNAc...) serine glycan.

Belongs to the fetuin family. As to quaternary structure, alpha-2-HS glycoprotein derives from this precursor, when the connecting peptide is cleaved off. The two chains A and B are held together by a single disulfide bond. In terms of processing, phosphorylated by FAM20C in the extracellular medium. O- and N-glycosylated. O-glycosylated with core 1 or possibly core 8 glycans. N-glycan at Asn-156: Hex5HexNAc4; N-glycan heterogeneity at Asn-176: Hex5HexNAc4 (major) and Hex6HexNAc5 (minor). Synthesized in liver and selectively concentrated in bone matrix. Secreted in plasma. It is also found in dentin in much higher quantities than other plasma proteins.

The protein resides in the secreted. Functionally, promotes endocytosis, possesses opsonic properties and influences the mineral phase of bone. Shows affinity for calcium and barium ions. The polypeptide is Alpha-2-HS-glycoprotein (AHSG) (Homo sapiens (Human)).